The following is a 423-amino-acid chain: Serine hydroxymethyltransferase (423 aa).

Residues L126 and 130 to 132 (GHL) each bind (6S)-5,6,7,8-tetrahydrofolate. An N6-(pyridoxal phosphate)lysine modification is found at K235.

This sequence belongs to the SHMT family. Homodimer. Pyridoxal 5'-phosphate is required as a cofactor.

Its subcellular location is the cytoplasm. It catalyses the reaction (6R)-5,10-methylene-5,6,7,8-tetrahydrofolate + glycine + H2O = (6S)-5,6,7,8-tetrahydrofolate + L-serine. It participates in one-carbon metabolism; tetrahydrofolate interconversion. It functions in the pathway amino-acid biosynthesis; glycine biosynthesis; glycine from L-serine: step 1/1. Functionally, catalyzes the reversible interconversion of serine and glycine with tetrahydrofolate (THF) serving as the one-carbon carrier. This reaction serves as the major source of one-carbon groups required for the biosynthesis of purines, thymidylate, methionine, and other important biomolecules. Also exhibits THF-independent aldolase activity toward beta-hydroxyamino acids, producing glycine and aldehydes, via a retro-aldol mechanism. The protein is Serine hydroxymethyltransferase of Sorangium cellulosum (strain So ce56) (Polyangium cellulosum (strain So ce56)).